Consider the following 355-residue polypeptide: SH3 domain-containing protein Dlish (355 aa).

SH3 domains follow at residues 57–117 (SPDS…PCNT), 183–243 (EPSG…PADS), and 287–352 (YHGT…PPAM).

In terms of assembly, interacts with dachs (via C-terminus); the interaction is direct. Interacts (via N-terminus including SH3 domain 1) with palmitoyltransferase app; this leads to palmitoylation of Dlish by app. Also interacts with dco, ft, ft-regulated E3 ubiquitin ligase Fbxl7, F-box protein slmb and SCF E3 ubiquitin-protein ligase complex component Cul1. Post-translationally, palmitoylated by app.

The protein localises to the cytoplasm. It is found in the cell cortex. Its function is as follows. Required for the apical cell cortex localization, total cellular level and full activity of dachs. The chain is SH3 domain-containing protein Dlish from Drosophila melanogaster (Fruit fly).